The primary structure comprises 431 residues: Protein translocase subunit SecY (431 aa).

Helical transmembrane passes span 18–38, 64–84, 116–136, 146–166, 175–195, 214–234, 262–282, 309–329, 369–389, and 390–410; these read IIFTLLMLIVFRLGSFIPVPH, LFNFSILAMGIMPYITASIII, FTIVLGFIQALGMSYGFNNMA, VGTYLLIAIVLTAGTAFLMWL, VGNGISIIIFAGIVAGIPQTI, IIKVVVILVAILAIVVGVIFI, LPLKVNPAGVIPVIFAVAFIT, PVGMGVYAALIIAFTYFYAFV, FVGSIFLAVIAILPVLFVNIA, and GLPSSAQIGGTSLLIVIGVAL.

It belongs to the SecY/SEC61-alpha family. As to quaternary structure, component of the Sec protein translocase complex. Heterotrimer consisting of SecY, SecE and SecG subunits. The heterotrimers can form oligomers, although 1 heterotrimer is thought to be able to translocate proteins. Interacts with the ribosome. Interacts with SecDF, and other proteins may be involved. Interacts with SecA.

It is found in the cell membrane. Functionally, the central subunit of the protein translocation channel SecYEG. Consists of two halves formed by TMs 1-5 and 6-10. These two domains form a lateral gate at the front which open onto the bilayer between TMs 2 and 7, and are clamped together by SecE at the back. The channel is closed by both a pore ring composed of hydrophobic SecY resides and a short helix (helix 2A) on the extracellular side of the membrane which forms a plug. The plug probably moves laterally to allow the channel to open. The ring and the pore may move independently. The polypeptide is Protein translocase subunit SecY (Bacillus licheniformis (strain ATCC 14580 / DSM 13 / JCM 2505 / CCUG 7422 / NBRC 12200 / NCIMB 9375 / NCTC 10341 / NRRL NRS-1264 / Gibson 46)).